We begin with the raw amino-acid sequence, 476 residues long: Ubiquinone biosynthesis monooxygenase COQ6, mitochondrial (476 aa).

The N-terminal 42 residues, 1-42, are a transit peptide targeting the mitochondrion; that stretch reads MAARIGPMAGLLCVRWWSTAQLAARGGPLVACRRWTSSSTDS.

Belongs to the UbiH/COQ6 family. In terms of assembly, component of a multi-subunit COQ enzyme complex, composed of at least COQ3, COQ4, COQ5, COQ6, COQ7 and COQ9. Interacts with COQ8B and COQ7. FAD serves as cofactor. In the kidney, expressed almost exclusively in glomerular podocytes. In the inner ear, expressed in the spiral ganglion, as well as in stria vascularis and spiral ligament cells.

It is found in the mitochondrion inner membrane. The protein resides in the golgi apparatus. Its subcellular location is the cell projection. It carries out the reaction 4-hydroxy-3-(all-trans-decaprenyl)benzoate + 2 reduced [2Fe-2S]-[ferredoxin] + O2 + 2 H(+) = 3,4-dihydroxy-5-(all-trans-decaprenyl)benzoate + 2 oxidized [2Fe-2S]-[ferredoxin] + H2O. The catalysed reaction is 2-methoxy-6-(all-trans-decaprenyl)phenol + 2 reduced [2Fe-2S]-[ferredoxin] + O2 + 2 H(+) = 2-methoxy-6-(all-trans-decaprenyl)benzene-1,4-diol + 2 oxidized [2Fe-2S]-[ferredoxin] + H2O. It functions in the pathway cofactor biosynthesis; ubiquinone biosynthesis. FAD-dependent monooxygenase required for two non-consecutive steps during ubiquinone biosynthesis. Required for the C5-ring hydroxylation during ubiquinone biosynthesis by catalyzing the hydroxylation of 4-hydroxy-3-(all-trans-decaprenyl)benzoic acid to 3,4-dihydroxy-5-(all-trans-decaprenyl)benzoic acid. Also acts downstream of COQ4, for the C1-hydroxylation during ubiquinone biosynthesis by catalyzing the hydroxylation of 2-methoxy-6-(all-trans-decaprenyl)phenol to 2-methoxy-6-(all-trans-decaprenyl)benzene-1,4-diol. The electrons required for the hydroxylation reaction are funneled indirectly to COQ6 from NADPH via a ferredoxin/ferredoxin reductase system composed of FDX2 and FDXR. The sequence is that of Ubiquinone biosynthesis monooxygenase COQ6, mitochondrial from Rattus norvegicus (Rat).